A 430-amino-acid polypeptide reads, in one-letter code: MQASIESTGNLERRLTFTLPQERLETHVGGRLRELARTTRIKGFRPGKVPTKVIEQRFGQQVRAEAMEGLLRETFDSAVREHSLRLAGNPRIDQGESDFDFVATFEVVPDFGDIDVTNLSVVRHTAEVTDADIDQMIENLRLQRRTWNPVERGAQVGDLVALETWSQAGNERLPAEGVETGSSVLGSGVMFDQIEKGLEGLSKGEDKALSIDFPADWRVPQLAGKTVQVHVKAVEVSEPVLPEVNKEFIKSFGVKSGDAEQFRADIRTNLERELKGALMNRLRREVGEQLIAAYAHVEMPPRLVENEARSMLAQQVDQMRRSGRNPGEIPADAHQGFMDAAAKRVLVGLLVGEVARRNELRLESKRVSETLRLIASTYEEPEQVIEMYRNDPQLMSGLRSRVMEEQVIDWIAERAKHTEQSLSFQDAIRV.

Residues 157-242 enclose the PPIase FKBP-type domain; that stretch reads GDLVALETWS…AVEVSEPVLP (86 aa).

It belongs to the FKBP-type PPIase family. Tig subfamily.

The protein resides in the cytoplasm. It catalyses the reaction [protein]-peptidylproline (omega=180) = [protein]-peptidylproline (omega=0). Functionally, involved in protein export. Acts as a chaperone by maintaining the newly synthesized protein in an open conformation. Functions as a peptidyl-prolyl cis-trans isomerase. This is Trigger factor from Xanthomonas campestris pv. campestris (strain B100).